Here is a 238-residue protein sequence, read N- to C-terminus: CASP-like protein 2BC2 (238 aa).

The Cytoplasmic segment spans residues 1–66; the sequence is MPSSTYPRRR…FHQKVAVEKR (66 aa). A helical membrane pass occupies residues 67–87; the sequence is LKIGEVILRFAMIALALVAAV. At 88 to 111 the chain is on the extracellular side; the sequence is RVGTDTQTRTIFTIEKKAKYSDMK. Residues 112–132 form a helical membrane-spanning segment; sequence ALVFLVVMNGIVASYSLLQGL. At 133–148 the chain is on the cytoplasmic side; it reads RCVLSIYTQSPLTSKP. Residues 149 to 169 traverse the membrane as a helical segment; that stretch reads LAWLIFALDQTMAYFSLAAAA. The Extracellular segment spans residues 170–200; that stretch reads AAAESAYLAERGQTEFQWMKVCIFYEKFCHQ. A helical transmembrane segment spans residues 201 to 221; the sequence is IGEGLVSTFLVSLSMATVSGM. The Cytoplasmic segment spans residues 222–238; it reads SAYHLFRLYGSKGKSIQ.

The protein belongs to the Casparian strip membrane proteins (CASP) family. In terms of assembly, homodimer and heterodimers.

Its subcellular location is the cell membrane. The polypeptide is CASP-like protein 2BC2 (Picea sitchensis (Sitka spruce)).